We begin with the raw amino-acid sequence, 137 residues long: ATP synthase epsilon chain (137 aa).

The protein belongs to the ATPase epsilon chain family. In terms of assembly, F-type ATPases have 2 components, CF(1) - the catalytic core - and CF(0) - the membrane proton channel. CF(1) has five subunits: alpha(3), beta(3), gamma(1), delta(1), epsilon(1). CF(0) has three main subunits: a, b and c.

The protein localises to the cell membrane. Its function is as follows. Produces ATP from ADP in the presence of a proton gradient across the membrane. The chain is ATP synthase epsilon chain from Thermobifida fusca (strain YX).